The sequence spans 488 residues: Cardiolipin synthase 2 (488 aa).

A run of 2 helical transmembrane segments spans residues 8-28 (IIIN…AFII) and 39-59 (IWAW…LYLL). PLD phosphodiesterase domains are found at residues 223 to 250 (MNNR…GDEY) and 401 to 428 (DNGF…DNRS). Catalysis depends on residues His-228, Lys-230, Asp-235, His-406, Lys-408, and Asp-413.

Belongs to the phospholipase D family. Cardiolipin synthase subfamily.

The protein resides in the cell membrane. It catalyses the reaction 2 a 1,2-diacyl-sn-glycero-3-phospho-(1'-sn-glycerol) = a cardiolipin + glycerol. Its function is as follows. Catalyzes the reversible phosphatidyl group transfer from one phosphatidylglycerol molecule to another to form cardiolipin (CL) (diphosphatidylglycerol) and glycerol. The polypeptide is Cardiolipin synthase 2 (cls2) (Staphylococcus epidermidis (strain ATCC 35984 / DSM 28319 / BCRC 17069 / CCUG 31568 / BM 3577 / RP62A)).